The sequence spans 322 residues: Ethylmalonyl-CoA decarboxylase (322 aa).

The residue at position 232 (Lys-232) is an N6-acetyllysine; alternate. Lys-232 is subject to N6-succinyllysine; alternate. Lys-316 is modified (N6-succinyllysine).

The protein belongs to the enoyl-CoA hydratase/isomerase family.

The protein resides in the cytoplasm. The protein localises to the cytosol. The enzyme catalyses (2S)-ethylmalonyl-CoA + H(+) = butanoyl-CoA + CO2. The catalysed reaction is (S)-methylmalonyl-CoA + H(+) = propanoyl-CoA + CO2. It catalyses the reaction (2R)-ethylmalonyl-CoA + H(+) = butanoyl-CoA + CO2. Decarboxylates ethylmalonyl-CoA, a potentially toxic metabolite, to form butyryl-CoA, suggesting it might be involved in metabolite proofreading. Acts preferentially on (S)-ethylmalonyl-CoA but also has some activity on the (R)-isomer. Also has methylmalonyl-CoA decarboxylase activity at lower level. The protein is Ethylmalonyl-CoA decarboxylase (Echdc1) of Mus musculus (Mouse).